Consider the following 268-residue polypeptide: Interleukin-1 alpha (268 aa).

Positions 1–112 are excised as a propeptide; it reads MAKVPDLFED…NTEEEIIKPR (112 aa). The residue at position 82 (Lys-82) is an N6-acetyllysine. Positions 82-86 are nuclear localization signal (NLS); that stretch reads KKRRL. Ser-87 carries the post-translational modification Phosphoserine. Asn-102 and Asn-141 each carry an N-linked (GlcNAc...) asparagine glycan.

The protein belongs to the IL-1 family. As to quaternary structure, monomer. Interacts with TMED10; the interaction mediates the translocation from the cytoplasm into the ERGIC (endoplasmic reticulum-Golgi intermediate compartment) and thereby secretion. Interacts with IL1R1. Interacts with S100A13; this interaction is the first step in the export of IL1A, followed by direct translocation of this complex across the plasma membrane. Acetylated within its nuclear localization sequence, which impacts subcellular localization. In terms of processing, proteolytic processed by CAPN1 in a calcium-dependent manner. Cleavage from 31 kDa precursor to 18 kDa biologically active molecules. Post-translationally, phosphorylated. Phosphorylation greatly enhances susceptibility to digestion and promotes the conversion of pre-IL1A alpha to the biologically active IL1A.

The protein localises to the nucleus. It is found in the cytoplasm. The protein resides in the secreted. In terms of biological role, cytokine constitutively present intracellularly in nearly all resting non-hematopoietic cells that plays an important role in inflammation and bridges the innate and adaptive immune systems. After binding to its receptor IL1R1 together with its accessory protein IL1RAP, forms the high affinity interleukin-1 receptor complex. Signaling involves the recruitment of adapter molecules such as MYD88, IRAK1 or IRAK4. In turn, mediates the activation of NF-kappa-B and the three MAPK pathways p38, p42/p44 and JNK pathways. Within the cell, acts as an alarmin and cell death results in its liberation in the extracellular space after disruption of the cell membrane to induce inflammation and alert the host to injury or damage. In addition to its role as a danger signal, which occurs when the cytokine is passively released by cell necrosis, directly senses DNA damage and acts as signal for genotoxic stress without loss of cell integrity. In Bubalus carabanensis (Swamp type water buffalo), this protein is Interleukin-1 alpha (IL1A).